We begin with the raw amino-acid sequence, 647 residues long: Macrolide export ATP-binding/permease protein MacB (647 aa).

Residues 6–244 enclose the ABC transporter domain; sequence LEISGCYRTF…VDTAVTKINN (239 aa). 42–49 lines the ATP pocket; that stretch reads GASGSGKS. Helical transmembrane passes span 273-293, 522-542, 577-597, and 612-632; these read FLTM…VALG, LLIS…VMNI, LVCL…GVVF, and SIVA…FLPA.

The protein belongs to the ABC transporter superfamily. Macrolide exporter (TC 3.A.1.122) family. In terms of assembly, homodimer. Part of the tripartite efflux system MacAB-TolC, which is composed of an inner membrane transporter, MacB, a periplasmic membrane fusion protein, MacA, and an outer membrane component, TolC. The complex forms a large protein conduit and can translocate molecules across both the inner and outer membranes. Interacts with MacA.

Its subcellular location is the cell inner membrane. In terms of biological role, part of the tripartite efflux system MacAB-TolC. MacB is a non-canonical ABC transporter that contains transmembrane domains (TMD), which form a pore in the inner membrane, and an ATP-binding domain (NBD), which is responsible for energy generation. Confers resistance against macrolides. The protein is Macrolide export ATP-binding/permease protein MacB of Shewanella sp. (strain W3-18-1).